The primary structure comprises 230 residues: Ribonuclease 3 (230 aa).

The region spanning 5–134 (EALLENSFNI…FLGALLLDKG (130 aa)) is the RNase III domain. Position 47 (Glu47) interacts with Mg(2+). Residue Asp51 is part of the active site. Residues Asp120 and Glu123 each coordinate Mg(2+). Glu123 is an active-site residue. Positions 160–229 (DYKTCLQELL…AKNALAQLSE (70 aa)) constitute a DRBM domain.

The protein belongs to the ribonuclease III family. Homodimer. Requires Mg(2+) as cofactor.

The protein localises to the cytoplasm. It catalyses the reaction Endonucleolytic cleavage to 5'-phosphomonoester.. In terms of biological role, digests double-stranded RNA. Involved in the processing of primary rRNA transcript to yield the immediate precursors to the large and small rRNAs (23S and 16S). Processes some mRNAs, and tRNAs when they are encoded in the rRNA operon. Processes pre-crRNA and tracrRNA of type II CRISPR loci if present in the organism. This chain is Ribonuclease 3, found in Streptococcus equi subsp. zooepidemicus (strain H70).